The primary structure comprises 355 residues: UDP-3-O-acylglucosamine N-acyltransferase (355 aa).

H252 (proton acceptor) is an active-site residue.

The protein belongs to the transferase hexapeptide repeat family. LpxD subfamily. In terms of assembly, homotrimer.

The enzyme catalyses a UDP-3-O-[(3R)-3-hydroxyacyl]-alpha-D-glucosamine + a (3R)-hydroxyacyl-[ACP] = a UDP-2-N,3-O-bis[(3R)-3-hydroxyacyl]-alpha-D-glucosamine + holo-[ACP] + H(+). The protein operates within bacterial outer membrane biogenesis; LPS lipid A biosynthesis. Its function is as follows. Catalyzes the N-acylation of UDP-3-O-acylglucosamine using 3-hydroxyacyl-ACP as the acyl donor. Is involved in the biosynthesis of lipid A, a phosphorylated glycolipid that anchors the lipopolysaccharide to the outer membrane of the cell. In Polynucleobacter necessarius subsp. necessarius (strain STIR1), this protein is UDP-3-O-acylglucosamine N-acyltransferase.